The primary structure comprises 127 residues: Aspartate 1-decarboxylase (127 aa).

The active-site Schiff-base intermediate with substrate; via pyruvic acid is the Ser-25. Ser-25 is subject to Pyruvic acid (Ser). Thr-57 is a binding site for substrate. The active-site Proton donor is the Tyr-58. Residue 73–75 (GAA) participates in substrate binding.

This sequence belongs to the PanD family. As to quaternary structure, heterooctamer of four alpha and four beta subunits. It depends on pyruvate as a cofactor. Is synthesized initially as an inactive proenzyme, which is activated by self-cleavage at a specific serine bond to produce a beta-subunit with a hydroxyl group at its C-terminus and an alpha-subunit with a pyruvoyl group at its N-terminus.

The protein resides in the cytoplasm. It carries out the reaction L-aspartate + H(+) = beta-alanine + CO2. It participates in cofactor biosynthesis; (R)-pantothenate biosynthesis; beta-alanine from L-aspartate: step 1/1. Its function is as follows. Catalyzes the pyruvoyl-dependent decarboxylation of aspartate to produce beta-alanine. In Neisseria meningitidis serogroup A / serotype 4A (strain DSM 15465 / Z2491), this protein is Aspartate 1-decarboxylase.